The following is a 229-amino-acid chain: Ribonuclease 3 (229 aa).

The region spanning 5-127 (LAGLERKLGY…LIGAIYLDAD (123 aa)) is the RNase III domain. Residue Glu40 participates in Mg(2+) binding. Asp44 is a catalytic residue. Mg(2+) contacts are provided by Asp113 and Glu116. The active site involves Glu116. The DRBM domain occupies 154–224 (DPKTRLQEFL…AASALIALGV (71 aa)).

This sequence belongs to the ribonuclease III family. In terms of assembly, homodimer. It depends on Mg(2+) as a cofactor.

It is found in the cytoplasm. The enzyme catalyses Endonucleolytic cleavage to 5'-phosphomonoester.. In terms of biological role, digests double-stranded RNA. Involved in the processing of primary rRNA transcript to yield the immediate precursors to the large and small rRNAs (23S and 16S). Processes some mRNAs, and tRNAs when they are encoded in the rRNA operon. Processes pre-crRNA and tracrRNA of type II CRISPR loci if present in the organism. The protein is Ribonuclease 3 of Pseudomonas putida (strain ATCC 700007 / DSM 6899 / JCM 31910 / BCRC 17059 / LMG 24140 / F1).